Here is a 388-residue protein sequence, read N- to C-terminus: Succinate--CoA ligase [ADP-forming] subunit beta (388 aa).

The ATP-grasp domain occupies 9 to 244; it reads KGILSGFDVR…PHEYSEEELE (236 aa). Residues Lys46, 53-55, Glu99, Val102, and Glu107 each bind ATP; that span reads GRG. Residues Asn199 and Asp213 each contribute to the Mg(2+) site. Residues Asn264 and 320 to 322 contribute to the substrate site; that span reads GIM.

The protein belongs to the succinate/malate CoA ligase beta subunit family. Heterotetramer of two alpha and two beta subunits. Mg(2+) serves as cofactor.

The enzyme catalyses succinate + ATP + CoA = succinyl-CoA + ADP + phosphate. The catalysed reaction is GTP + succinate + CoA = succinyl-CoA + GDP + phosphate. It functions in the pathway carbohydrate metabolism; tricarboxylic acid cycle; succinate from succinyl-CoA (ligase route): step 1/1. Its function is as follows. Succinyl-CoA synthetase functions in the citric acid cycle (TCA), coupling the hydrolysis of succinyl-CoA to the synthesis of either ATP or GTP and thus represents the only step of substrate-level phosphorylation in the TCA. The beta subunit provides nucleotide specificity of the enzyme and binds the substrate succinate, while the binding sites for coenzyme A and phosphate are found in the alpha subunit. The polypeptide is Succinate--CoA ligase [ADP-forming] subunit beta (Anaplasma phagocytophilum (strain HZ)).